A 207-amino-acid chain; its full sequence is MVSTMLSGLVLWLTFGWTPALAYSPRTPDRVSETDIQRLLHGVMEQLGIARPRVEYPAHQAMNLVGPQSIEGGAHEGLQHLGPFGNIPNIVAELTGDNTPKDFSEDQGYPDPPNPCPIGKTDDGCLENTPDTAEFSREFQLHQHLFDPEHDYPGLGKWNKKLLYEKMKGGQRRKRRSVNPYLQGQRLDNVVAKKSVPHFSDEDKDPE.

An N-terminal signal peptide occupies residues Met-1–Ala-22. A disulfide bond links Cys-116 and Cys-125. A phosphoserine mark is found at Ser-136 and Ser-200. Residues Lys-168–Glu-207 form a disordered region.

It belongs to the 7B2 family. Interacts with PCSK2/PC2 early in the secretory pathway. Dissociation occurs at later stages. Post-translationally, proteolytically cleaved in the Golgi by a furin-like convertase to generate bioactive peptides. In terms of processing, sulfated on tyrosine residues.

It localises to the secreted. Its function is as follows. Acts as a molecular chaperone for PCSK2/PC2, preventing its premature activation in the regulated secretory pathway. Binds to inactive PCSK2 in the endoplasmic reticulum and facilitates its transport from there to later compartments of the secretory pathway where it is proteolytically matured and activated. Also required for cleavage of PCSK2 but does not appear to be involved in its folding. Plays a role in regulating pituitary hormone secretion. The C-terminal peptide inhibits PCSK2 in vitro. This chain is Neuroendocrine protein 7B2 (SCG5), found in Sus scrofa (Pig).